Here is a 168-residue protein sequence, read N- to C-terminus: ATP synthase subunit b, chloroplastic (168 aa).

Residues 20 to 37 (LNLAVVLPIVFTLGRDTL) traverse the membrane as a helical segment.

It belongs to the ATPase B chain family. F-type ATPases have 2 components, F(1) - the catalytic core - and F(0) - the membrane proton channel. F(1) has five subunits: alpha(3), beta(3), gamma(1), delta(1), epsilon(1). F(0) has four main subunits: a(1), b(1), b'(1) and c(10-14). The alpha and beta chains form an alternating ring which encloses part of the gamma chain. F(1) is attached to F(0) by a central stalk formed by the gamma and epsilon chains, while a peripheral stalk is formed by the delta, b and b' chains.

The protein localises to the plastid. It localises to the chloroplast thylakoid membrane. Functionally, f(1)F(0) ATP synthase produces ATP from ADP in the presence of a proton or sodium gradient. F-type ATPases consist of two structural domains, F(1) containing the extramembraneous catalytic core and F(0) containing the membrane proton channel, linked together by a central stalk and a peripheral stalk. During catalysis, ATP synthesis in the catalytic domain of F(1) is coupled via a rotary mechanism of the central stalk subunits to proton translocation. Component of the F(0) channel, it forms part of the peripheral stalk, linking F(1) to F(0). The chain is ATP synthase subunit b, chloroplastic from Ostreococcus tauri.